The chain runs to 269 residues: Zinc transporter ZupT (269 aa).

8 helical membrane passes run 11–31 (IALA…LLVL), 40–60 (LLAF…LSEI), 80–100 (YGTL…HFIP), 125–145 (ALLT…ATFF), 158–178 (AFAI…PVYF), 187–207 (FSAS…GYWL), 217–237 (FGWV…DELL), and 249–269 (TVYG…LFKW). Residues Asn-136 and Glu-139 each contribute to the Fe(2+) site. Glu-139 and His-164 together coordinate Zn(2+). The Fe(2+) site is built by Asn-165, Glu-168, and Glu-197. Glu-168 serves as a coordination point for Zn(2+).

Belongs to the ZIP transporter (TC 2.A.5) family. ZupT subfamily.

It is found in the cell inner membrane. The catalysed reaction is Zn(2+)(in) = Zn(2+)(out). Its function is as follows. Mediates zinc uptake. May also transport other divalent cations. The chain is Zinc transporter ZupT from Stenotrophomonas maltophilia (strain K279a).